Consider the following 496-residue polypeptide: Probable G-protein coupled receptor K01A12.3 (496 aa).

Over 1–19 (MESVTRHRADMISFFTFDS) the chain is Extracellular. The helical transmembrane segment at 20-40 (YISIVGVAYTAVGLLGVFCNV) threads the bilayer. Topologically, residues 41–58 (TTVIMILTNRVFRLSAYT) are cytoplasmic. A helical transmembrane segment spans residues 59 to 79 (IMANVALADSIVMLIAGVACG). The Extracellular segment spans residues 80–128 (MDVMWPNPNDLTSFIPSLEEPYQKIAPVSLRNDSKTDSSAAGFETGNIH). A glycan (N-linked (GlcNAc...) asparagine) is linked at N111. A helical transmembrane segment spans residues 129–149 (AVLSFSFVAAWTAGVISYAML). Topologically, residues 150–169 (GTNRCIAICYYGTKARALNQ) are cytoplasmic. Residues 170 to 190 (VSVAVACSASTWIVGIAAALV) form a helical membrane-spanning segment. The Extracellular portion of the chain corresponds to 191–216 (GTLSQPMIGIQRTMWSISFLEPRPHT). The helical transmembrane segment at 217–237 (TLFFTLLCAANLLGLGAQWVC) threads the bilayer. The Cytoplasmic segment spans residues 238–285 (STLVLLKIRQVKKKISKNKLNQNSANRFRKQVILALNEIIVTGNFKAR). Residues 286–306 (LTFQFFYPSILCTISTFLFFI) traverse the membrane as a helical segment. Topologically, residues 307 to 318 (KPYAFEYLSGWQ) are extracellular. A helical transmembrane segment spans residues 319–339 (LVILHLLWLCNHTCNPFIYAY). The Cytoplasmic segment spans residues 340 to 496 (FNDRMRLTYK…WVKFAKKASI (157 aa)). Residues 451–470 (TKELESAHNQGGSSRFDSER) are disordered.

It belongs to the G-protein coupled receptor 1 family.

Its subcellular location is the cell membrane. The chain is Probable G-protein coupled receptor K01A12.3 from Caenorhabditis elegans.